The chain runs to 232 residues: Ubiquinone biosynthesis O-methyltransferase (232 aa).

Residues Arg36, Gly55, Asp76, and Leu120 each contribute to the S-adenosyl-L-methionine site.

This sequence belongs to the methyltransferase superfamily. UbiG/COQ3 family.

The catalysed reaction is a 3-demethylubiquinol + S-adenosyl-L-methionine = a ubiquinol + S-adenosyl-L-homocysteine + H(+). The enzyme catalyses a 3-(all-trans-polyprenyl)benzene-1,2-diol + S-adenosyl-L-methionine = a 2-methoxy-6-(all-trans-polyprenyl)phenol + S-adenosyl-L-homocysteine + H(+). It functions in the pathway cofactor biosynthesis; ubiquinone biosynthesis. In terms of biological role, O-methyltransferase that catalyzes the 2 O-methylation steps in the ubiquinone biosynthetic pathway. The sequence is that of Ubiquinone biosynthesis O-methyltransferase from Stutzerimonas stutzeri (strain A1501) (Pseudomonas stutzeri).